The sequence spans 318 residues: Methionyl-tRNA formyltransferase (318 aa).

112-115 provides a ligand contact to (6S)-5,6,7,8-tetrahydrofolate; the sequence is SILP.

It belongs to the Fmt family.

It carries out the reaction L-methionyl-tRNA(fMet) + (6R)-10-formyltetrahydrofolate = N-formyl-L-methionyl-tRNA(fMet) + (6S)-5,6,7,8-tetrahydrofolate + H(+). Functionally, attaches a formyl group to the free amino group of methionyl-tRNA(fMet). The formyl group appears to play a dual role in the initiator identity of N-formylmethionyl-tRNA by promoting its recognition by IF2 and preventing the misappropriation of this tRNA by the elongation apparatus. In Shewanella oneidensis (strain ATCC 700550 / JCM 31522 / CIP 106686 / LMG 19005 / NCIMB 14063 / MR-1), this protein is Methionyl-tRNA formyltransferase.